A 90-amino-acid polypeptide reads, in one-letter code: MASPLDQAIGLLIGIFHKYSGKEGDKHTLSKKELKELIQKELTIGSKLQDAEIVKLMDDLDRNKDQEVNFQEYITFLGALAMIYNEALKG.

EF-hand domains follow at residues 12–47 (LIGI…IGSK) and 48–83 (LQDA…LAMI). Ca(2+)-binding residues include Thr-28 and Glu-33. N6-acetyllysine is present on Lys-40. Ser-46 carries the post-translational modification Phosphoserine. Residue Lys-47 is modified to N6-acetyllysine; alternate. Lys-47 is subject to N6-succinyllysine; alternate. Residues Asp-61, Asn-63, Asp-65, Glu-67, and Glu-72 each contribute to the Ca(2+) site.

It belongs to the S-100 family. Homodimer; head to tail assembly of 2 subunits. Interacts with CACYBP in a calcium-dependent manner. Interacts with ANXA2 and ANXA11 (via N-terminus). Interacts with SUGT1. Interacts with TP53; has higher affinity for TP53 that is phosphorylated on its N-terminal domain, and lower affinity for TP53 that is phosphorylated on its C-terminal domain. Interacts with tropomyosin. Interacts with FKBP4. Interacts with PPP5C (via TPR repeats); the interaction is calcium-dependent and modulates PPP5C activity. Interacts with TPPP; this interaction inhibits TPPP dimerization.

Its subcellular location is the nucleus envelope. The protein resides in the cytoplasm. It localises to the cell membrane. Its function is as follows. May function as calcium sensor and modulator, contributing to cellular calcium signaling. May function by interacting with other proteins, such as TPR-containing proteins, and indirectly play a role in many physiological processes such as the reorganization of the actin cytoskeleton and in cell motility. Binds 2 calcium ions. Calcium binding is cooperative. This chain is Protein S100-A6 (S100A6), found in Oryctolagus cuniculus (Rabbit).